Consider the following 149-residue polypeptide: uncharacterized protein (149 aa).

A run of 3 helical transmembrane segments spans residues 39–61 (VPLG…LIIG), 82–104 (VFGY…GAIL), and 119–141 (WMMM…SIYL).

It to M.pneumoniae MPN_090.

Its subcellular location is the cell membrane. This is an uncharacterized protein from Mycoplasma pneumoniae (strain ATCC 29342 / M129 / Subtype 1) (Mycoplasmoides pneumoniae).